Here is a 411-residue protein sequence, read N- to C-terminus: Bifunctional protein GlmU (411 aa).

Positions Met-1–Asn-204 are pyrophosphorylase. UTP-binding positions include Leu-6 to Gly-9, Gln-74, and Gly-79. Thr-80, Gly-130, Asn-142, and Asn-158 together coordinate N-acetyl-alpha-D-glucosamine 1-phosphate. A linker region spans residues Gly-205–Leu-224. Positions Asn-225–Asn-411 are N-acetyltransferase. Catalysis depends on His-308, which acts as the Proton acceptor. Residues Ala-384 and Lys-401 each contribute to the acetyl-CoA site.

In the N-terminal section; belongs to the N-acetylglucosamine-1-phosphate uridyltransferase family. The protein in the C-terminal section; belongs to the transferase hexapeptide repeat family.

The enzyme catalyses N-acetyl-alpha-D-glucosamine 1-phosphate + UTP + H(+) = UDP-N-acetyl-alpha-D-glucosamine + diphosphate. It catalyses the reaction alpha-D-glucosamine 1-phosphate + acetyl-CoA = N-acetyl-alpha-D-glucosamine 1-phosphate + CoA + H(+). It participates in nucleotide-sugar biosynthesis; UDP-N-acetyl-alpha-D-glucosamine biosynthesis; N-acetyl-alpha-D-glucosamine 1-phosphate from alpha-D-glucosamine 6-phosphate (route II): step 2/2. The protein operates within nucleotide-sugar biosynthesis; UDP-N-acetyl-alpha-D-glucosamine biosynthesis; UDP-N-acetyl-alpha-D-glucosamine from N-acetyl-alpha-D-glucosamine 1-phosphate: step 1/1. Its function is as follows. Catalyzes the last two sequential reactions in the de novo biosynthetic pathway for UDP-N-acetyl-glucosamine (UDP-GlcNAc). Responsible for the acetylation of GlcN-1-P to GlcNAc-1-P, and for the uridyl transfer from UTP to GlcNAc-1-P, to produce UDP-GlcNAc and pyrophosphate. In Methanococcus maripaludis (strain C7 / ATCC BAA-1331), this protein is Bifunctional protein GlmU.